The sequence spans 224 residues: MSRRIIVGTLQRTQRNMNSGISQVFQRELTCPICMNYFIDPVTIDCGHSFCRPCFYLNWQDIPILTQCFECIKTIQQRNLKTNIRLKKMASLARKASLWLFLSSEEQMCGIHRETKKMFCEVDRSLLCLLCSSSQEHRYHRHCPAEWAAEEHWEKLLKKMQSLWEKACENQRNLNVETTRISHWKAFGDILYRSESVLLHMPQPLNLALRAGPITGLRDRLNQF.

An RING-type zinc finger spans residues Cys-31–Ile-72. The segment at Ser-104–Ala-145 adopts a B box-type zinc-finger fold. Zn(2+)-binding residues include Cys-109, His-112, Cys-131, and His-137.

It belongs to the TRIM/RBCC family. Interacts with PRMT1; the interaction leads to ubiquitination of PRMT1 by TRIM48. Interacts with MAP3K5. Interacts with STRAP.

It localises to the cytoplasm. The protein localises to the cytosol. It carries out the reaction S-ubiquitinyl-[E2 ubiquitin-conjugating enzyme]-L-cysteine + [acceptor protein]-L-lysine = [E2 ubiquitin-conjugating enzyme]-L-cysteine + N(6)-ubiquitinyl-[acceptor protein]-L-lysine.. E3 ubiquitin-protein ligase which promotes K48-linked polyubiquitination of protein methyltransferase PRMT1, leading to PRMT1 degradation. This suppresses methylation of the PRMT1 substrate MAP3K5/ASK1, promoting its activation and increasing MAP3K5-dependent cell death induced by oxidative stress. TRIM48-mediated ubiquitination of PRMT1 also suppresses methylation of FOXO1 by PRMT1, leading to inhibition of FOXO1 transcriptional activity. This Homo sapiens (Human) protein is E3 ubiquitin-protein ligase TRIM48.